Reading from the N-terminus, the 148-residue chain is Cofilin/actin-depolymerizing factor homolog (148 aa).

The region spanning 4-143 (GVTVSDVCKT…SREAVEEKLR (140 aa)) is the ADF-H domain. Residues 19-23 (KKDKK) carry the Nuclear localization signal motif.

This sequence belongs to the actin-binding proteins ADF family. In terms of processing, phosphorylated in vitro by protein kinase LIMK1. Phosphorylation is required for inactivation of tsr and for cell proliferation and axon growth. Phosphorylation is negatively regulated by the panthothenate kinase fbl which catalyzes the first step in the conversion of panthothenic acid to coenzyme A. Post-translationally, dephosphorylated by protein phosphatase ssh which activates tsr.

It localises to the cytoplasm. Its subcellular location is the cytoskeleton. It is found in the nucleus matrix. Functionally, exhibits F-actin depolymerizing activity and regulates actin cytoskeleton dynamics. Required for cytokinesis in both mitotic and meiotic cells and for aster migration and separation. Promotes cell motility during ovary development and oogenesis. During larval development, required for the cell rearrangement needed for formation of terminal filaments which are stacks of somatic cells that are important for the initiation of ovarioles. Also required for border cell migration during oogenesis. During border cell migration, required for actin turnover and lamellipodial protrusion. Required for the establishment of planar cell polarity (PCP) where cells adopt a uniform orientation within the plane of an epithelium. During establishment of PCP, required for the redistribution of the PCP core proteins fz and stan/fmi to the proximodistal cell boundary. During pupal development, required for elongation of the retinal cell body and for rhabdomere morphogenesis. Required for mushroom body neuroblast proliferation and axon growth. Plays a role in the positive regulation of protein secretion. Plays a role in the regulation of nuclear localization of actin. Required for the maintenance of epithelial integrity by controlling cell junctions and is also necessary for cell survival and tissue growth through regulation of JNK and yki signaling. The protein is Cofilin/actin-depolymerizing factor homolog of Drosophila melanogaster (Fruit fly).